Reading from the N-terminus, the 428-residue chain is GTPase Obg (428 aa).

Residues M1 to L158 enclose the Obg domain. The 171-residue stretch at A159 to E329 folds into the OBG-type G domain. GTP is bound by residues G165 to S172, F190 to V194, D212 to G215, N282 to D285, and S310 to V312. Mg(2+)-binding residues include S172 and T192. Residues K350 to D428 form the OCT domain.

Belongs to the TRAFAC class OBG-HflX-like GTPase superfamily. OBG GTPase family. Monomer. Mg(2+) is required as a cofactor.

It localises to the cytoplasm. Functionally, an essential GTPase which binds GTP, GDP and possibly (p)ppGpp with moderate affinity, with high nucleotide exchange rates and a fairly low GTP hydrolysis rate. Plays a role in control of the cell cycle, stress response, ribosome biogenesis and in those bacteria that undergo differentiation, in morphogenesis control. This Bacillus cereus (strain ATCC 14579 / DSM 31 / CCUG 7414 / JCM 2152 / NBRC 15305 / NCIMB 9373 / NCTC 2599 / NRRL B-3711) protein is GTPase Obg.